The following is an 867-amino-acid chain: MISAHILSRQATRPGHRGPRFTTHSTALLVQRSLGQGLPLAHRRTTRAWESTSSSTASTGSHKESGHIETAPHESLLFFNNLFPLKLSSILIWRPWTSEDLLQRFEQSSYSFIDPIRLVKRAINTHDQVPIEVTQIIPRLKDGGAFVKFTHPSDMSAAVVESKLSELLQNNPIKPWFNPFGRVKAGLVEGVPWLEDLYRLPRSRIRVEFVAAKDDASPAELSQETLYSIFRKFGKITEITSQPTDSKVLPRFAYIDFVLVRDAIMARNCMHGFVLREQGSKNATKLRLSYEQRVKAHHIWAWFTSHPRIVIPLVAALIAAFTVAVFDPIREFFVKAHVQKYFEFTNSRLYKWFKSQTSDILAFRRRKTEDAGLNALFTHRKDLIDSIQTGLLESVDTFTVVHGPRGSGKKELILDQVLKERSNVLHIDCKPVVEARGEAGTIGRLAFEVGYRPVFSWSNNISSLVDLAVQSTTGVKANFSENLESQVVKILQTTASALKQVGLSERKKEDKDADLSEDAYLEAHPERRPVIVIDHFLHKSEEKGVIYDRIADWAAALVQSNIAHVIFLTDDASYSKPLQRSLPDRVFRSVTLGDLSPDVAKKFVISQLQTDTKFAHDGQQKDSESGDQDNDNKNQKKDSNTPAPLDPTLLKELDTCITALGGRLTDLQVLARRLKIGQSPRKAVQEIIDSTASDILRMFLLSKSSTSDRKYTTEQAWYLISHLAASPSSSIPYNSVLLSNTFASSPETALEALANAELITVKSQNGMPSEIKAGKPVYQAAFQKLASDEKVKARMDLLVLTELAKMETQKIEKVEQELVMLQGLMARRPGDVSERVEYLLEKMKGGQARLKGLEKEMGVVKGQMVKG.

Disordered regions lie at residues 1–20 (MISA…RGPR) and 44–66 (RTTR…KESG). A mitochondrion-targeting transit peptide spans 1-41 (MISAHILSRQATRPGHRGPRFTTHSTALLVQRSLGQGLPLA). Residues 42–308 (HRRTTRAWES…IWAWFTSHPR (267 aa)) are Mitochondrial matrix-facing. Residues 48-59 (AWESTSSSTAST) are compositionally biased toward low complexity. In terms of domain architecture, RRM spans 203 to 293 (SRIRVEFVAA…TKLRLSYEQR (91 aa)). The helical transmembrane segment at 309–329 (IVIPLVAALIAAFTVAVFDPI) threads the bilayer. At 330 to 867 (REFFVKAHVQ…GVVKGQMVKG (538 aa)) the chain is on the mitochondrial intermembrane side. Over residues 614-639 (FAHDGQQKDSESGDQDNDNKNQKKDS) the composition is skewed to basic and acidic residues. The interval 614 to 647 (FAHDGQQKDSESGDQDNDNKNQKKDSNTPAPLDP) is disordered. Residues 797–857 (LLVLTELAKM…ARLKGLEKEM (61 aa)) adopt a coiled-coil conformation.

The protein belongs to the YME2 family.

The protein localises to the mitochondrion inner membrane. Functionally, plays a role in maintaining the mitochondrial genome and in controlling the mtDNA escape. Involved in the regulation of mtDNA nucleotide structure and number. May have a dispensable role in early maturation of pre-rRNA. The polypeptide is Mitochondrial escape protein 2 (msp-45) (Neurospora crassa (strain ATCC 24698 / 74-OR23-1A / CBS 708.71 / DSM 1257 / FGSC 987)).